A 327-amino-acid polypeptide reads, in one-letter code: ATPase GET3 (327 aa).

Lys27 to Thr34 contributes to the ATP binding site. Asp56 is an active-site residue. ATP-binding residues include Glu231 and Asn258. Zn(2+) is bound by residues Cys269 and Cys272.

The protein belongs to the arsA ATPase family. In terms of assembly, homodimer. Component of the Golgi to ER traffic (GET) complex, which is composed of GET1, GET2 and GET3. Within the complex, GET1 and GET2 form a heterotetramer which is stabilized by phosphatidylinositol binding and which binds to the GET3 homodimer. Interacts with the chloride channel protein GEF1.

The protein resides in the cytoplasm. The protein localises to the endoplasmic reticulum. It localises to the golgi apparatus. Its function is as follows. ATPase required for the post-translational delivery of tail-anchored (TA) proteins to the endoplasmic reticulum. Recognizes and selectively binds the transmembrane domain of TA proteins in the cytosol. This complex then targets to the endoplasmic reticulum by membrane-bound receptors GET1 and GET2, where the tail-anchored protein is released for insertion. This process is regulated by ATP binding and hydrolysis. ATP binding drives the homodimer towards the closed dimer state, facilitating recognition of newly synthesized TA membrane proteins. ATP hydrolysis is required for insertion. Subsequently, the homodimer reverts towards the open dimer state, lowering its affinity for the GET1-GET2 receptor, and returning it to the cytosol to initiate a new round of targeting. Cooperates with the HDEL receptor ERD2 to mediate the ATP-dependent retrieval of resident ER proteins that contain a C-terminal H-D-E-L retention signal from the Golgi to the ER. Involved in low-level resistance to the oxyanions arsenite and arsenate, and in heat tolerance. This Yarrowia lipolytica (strain CLIB 122 / E 150) (Yeast) protein is ATPase GET3.